The primary structure comprises 114 residues: Probable protein adenylyltransferase MntA (114 aa).

Positions 34–48 (GSRVKGKAKKYSDLD) match the GSX(10)DXD motif motif. Active-site residues include Asp46 and Asp48. Mg(2+) is bound by residues Asp46, Asp48, Glu67, Glu71, and Asp79.

The protein belongs to the MntA antitoxin family. Forms a complex with HepT, probably with a stoichiometry of 2:2. Mg(2+) serves as cofactor.

The enzyme catalyses L-tyrosyl-[protein] + ATP = O-(5'-adenylyl)-L-tyrosyl-[protein] + diphosphate. The catalysed reaction is O-(5'-adenylyl)-L-tyrosyl-[protein] + ATP = O-[5'-(adenylyl-(5'-&gt;3')-adenylyl)]-L-tyrosyl-[protein] + diphosphate. In terms of biological role, probable antitoxin component of a type VII toxin-antitoxin (TA) system. Neutralizes cognate toxic HEPN probably by di-AMPylation. A mixture of HepT and MntA binds nucleotides; the highest affinity is for TTP, ATP binds more tightly than ADP or AMP. This Haemophilus influenzae (strain ATCC 51907 / DSM 11121 / KW20 / Rd) protein is Probable protein adenylyltransferase MntA (mntA).